We begin with the raw amino-acid sequence, 325 residues long: tRNA dimethylallyltransferase (325 aa).

Residue glycine 11–serine 18 participates in ATP binding. Residue threonine 13–serine 18 coordinates substrate. Interaction with substrate tRNA stretches follow at residues aspartate 36–glutamine 39 and glutamine 160–arginine 164.

The protein belongs to the IPP transferase family. Monomer. Mg(2+) serves as cofactor.

It catalyses the reaction adenosine(37) in tRNA + dimethylallyl diphosphate = N(6)-dimethylallyladenosine(37) in tRNA + diphosphate. Its function is as follows. Catalyzes the transfer of a dimethylallyl group onto the adenine at position 37 in tRNAs that read codons beginning with uridine, leading to the formation of N6-(dimethylallyl)adenosine (i(6)A). The polypeptide is tRNA dimethylallyltransferase (Rickettsia canadensis (strain McKiel)).